The primary structure comprises 253 residues: (S)-2-haloacid dehalogenase (253 aa).

Asp8 (nucleophile) is an active-site residue. Residues 9 to 10 (AY), Arg39, and 114 to 115 (SN) each bind an (S)-2-haloacid. Residues 171–176 (SSNGFD) form an important for catalytic activity region.

It belongs to the HAD-like hydrolase superfamily. S-2-haloalkanoic acid dehalogenase family. Homodimer.

It carries out the reaction an (S)-2-haloacid + H2O = a (2R)-2-hydroxycarboxylate + a halide anion + H(+). The enzyme catalyses (S)-2-chloropropanoate + H2O = (R)-lactate + chloride + H(+). In terms of biological role, catalyzes the hydrolytic dehalogenation of small (S)-2-haloalkanoic acids to yield the corresponding (R)-2-hydroxyalkanoic acids. Acts on acids of short chain lengths, C(2) to C(4), with inversion of configuration at C-2. Active with 2-halogenated carboxylic acids and converts only the S-isomer (or L-isomer) of 2-chloropropionic acid with inversion of configuration to produce R-lactate (or D-isomer). The sequence is that of (S)-2-haloacid dehalogenase from Xanthobacter autotrophicus.